A 309-amino-acid polypeptide reads, in one-letter code: uncharacterized protein (309 aa).

Residues 1 to 16 (MAGNSRRRGAVRKAGT) are compositionally biased toward basic residues. Residues 1–70 (MAGNSRRRGA…AKRTEETETV (70 aa)) are disordered. Residues Gly261, Ile281, and Leu290 each coordinate S-adenosyl-L-methionine.

The protein belongs to the class IV-like SAM-binding methyltransferase superfamily. RNA methyltransferase TrmH family.

This is an uncharacterized protein from Mycolicibacterium paratuberculosis (strain ATCC BAA-968 / K-10) (Mycobacterium paratuberculosis).